Here is a 142-residue protein sequence, read N- to C-terminus: Large ribosomal subunit protein uL11 (142 aa).

The protein belongs to the universal ribosomal protein uL11 family. Part of the ribosomal stalk of the 50S ribosomal subunit. Interacts with L10 and the large rRNA to form the base of the stalk. L10 forms an elongated spine to which L12 dimers bind in a sequential fashion forming a multimeric L10(L12)X complex. Post-translationally, one or more lysine residues are methylated.

Forms part of the ribosomal stalk which helps the ribosome interact with GTP-bound translation factors. The chain is Large ribosomal subunit protein uL11 from Xylella fastidiosa (strain Temecula1 / ATCC 700964).